Consider the following 617-residue polypeptide: Sphingosine kinase 2 (617 aa).

Residues 1-140 (MAPPPLLPVA…LSGDQEITPE (140 aa)) are required for binding to sulfatide and phosphoinositides and for membrane localization. A Nuclear localization signal motif is present at residues 87–95 (RGRRGGRRR). Residues 143 to 290 (PRKPRLLILV…LDLLSVTLAS (148 aa)) form the DAGKc domain. ATP is bound by residues 153–155 (NPF) and 185–189 (TERQN). 210-213 (SGDG) serves as a coordination point for substrate. Asp212 acts as the Proton donor/acceptor in catalysis. Residues Glu217 and 242-244 (GSG) each bind ATP. Substrate is bound at residue Asp309. ATP is bound by residues Arg316 and Arg322. A phosphoserine mark is found at Ser358 and Ser364. Residues 371 to 472 (APAPAATHSP…GFLPPTHSAP (102 aa)) form a disordered region. Thr377 bears the Phosphothreonine mark. A Nuclear export signal motif is present at residues 381–390 (LHRSVSDLPL). 2 positions are modified to phosphoserine: Ser384 and Ser386. Over residues 412–426 (NGGGPELTGDWGGAG) the composition is skewed to gly residues. Phosphothreonine is present on Thr578. 586–588 (DGE) lines the ATP pocket.

As to quaternary structure, interacts with histone H3. Interacts with HDAC1, HDAC2, MBD2 and SIN3A. Interacts with EEF1A1; the interaction enhances SPHK2 kinase activity. Interacts with PHB2. Requires Mg(2+) as cofactor. Post-translationally, phosphorylated by PKD on Ser-384 and Ser-386 upon PMA treatment. Phosphorylation induces export from the nucleus to the cytoplasm. Phosphorylated by MAPK1 and MAPK2 at Thr-578, phosphorylation is induced by agonists such as EGF and PMA and increases kinase activity. In terms of processing, cleaved by CASP1 in apoptotic cells. The truncated form is released from cells. In terms of tissue distribution, expressed in heart, brain, liver, kidney and testis. Expressed by mast cells (at protein level). In the substantia nigra, expressed by dopaminergic neurons (at protein level).

The protein resides in the lysosome membrane. It localises to the cytoplasm. The protein localises to the cell membrane. It is found in the endoplasmic reticulum. Its subcellular location is the nucleus. The protein resides in the mitochondrion inner membrane. It carries out the reaction a sphingoid base + ATP = a sphingoid 1-phosphate + ADP + H(+). The catalysed reaction is sphing-4-enine + ATP = sphing-4-enine 1-phosphate + ADP + H(+). It catalyses the reaction sphinganine + ATP = sphinganine 1-phosphate + ADP + H(+). The enzyme catalyses (4R)-hydroxysphinganine + ATP = (4R)-hydroxysphinganine 1-phosphate + ADP + H(+). In terms of biological role, catalyzes the phosphorylation of sphingosine to form sphingosine-1-phosphate (SPP), a lipid mediator with both intra- and extracellular functions. Also acts on D-erythro-dihydrosphingosine, D-erythro-sphingosine and L-threo-dihydrosphingosine. Binds phosphoinositides. In contrast to prosurvival SPHK1, has a positive effect on intracellular ceramide levels, inhibits cells growth and enhances apoptosis. In mitochondria, is important for cytochrome-c oxidase assembly and mitochondrial respiration. The SPP produced in mitochondria binds PHB2 and modulates the regulation via PHB2 of complex IV assembly and respiration. In nucleus, plays a role in epigenetic regulation of gene expression. Interacts with HDAC1 and HDAC2 and, through SPP production, inhibits their enzymatic activity, preventing the removal of acetyl groups from lysine residues with histones. Up-regulates acetylation of histone H3-K9, histone H4-K5 and histone H2B-K12. In nucleus, may have an inhibitory effect on DNA synthesis and cell cycle. In mast cells, is the main regulator of SPP production which mediates calcium influx, NF-kappa-B activation, cytokine production, such as TNF and IL6, and degranulation of mast cells. In dopaminergic neurons, is involved in promoting mitochondrial functions regulating ATP and ROS levels. Also involved in the regulation of glucose and lipid metabolism. The protein is Sphingosine kinase 2 of Mus musculus (Mouse).